Reading from the N-terminus, the 118-residue chain is Large ribosomal subunit protein bL19 (118 aa).

The protein belongs to the bacterial ribosomal protein bL19 family.

Functionally, this protein is located at the 30S-50S ribosomal subunit interface and may play a role in the structure and function of the aminoacyl-tRNA binding site. The sequence is that of Large ribosomal subunit protein bL19 from Campylobacter jejuni subsp. jejuni serotype O:2 (strain ATCC 700819 / NCTC 11168).